We begin with the raw amino-acid sequence, 1284 residues long: DNA-directed RNA polymerase subunit beta (1284 aa).

It belongs to the RNA polymerase beta chain family. In terms of assembly, the RNAP catalytic core consists of 2 alpha, 1 beta, 1 beta' and 1 omega subunit. When a sigma factor is associated with the core the holoenzyme is formed, which can initiate transcription.

It catalyses the reaction RNA(n) + a ribonucleoside 5'-triphosphate = RNA(n+1) + diphosphate. DNA-dependent RNA polymerase catalyzes the transcription of DNA into RNA using the four ribonucleoside triphosphates as substrates. The protein is DNA-directed RNA polymerase subunit beta of Mesoplasma florum (strain ATCC 33453 / NBRC 100688 / NCTC 11704 / L1) (Acholeplasma florum).